Here is a 582-residue protein sequence, read N- to C-terminus: uncharacterized protein (582 aa).

The next 12 helical transmembrane spans lie at 29 to 49 (LFIV…FAAL), 117 to 137 (ISAP…MGLA), 155 to 175 (VWAT…MIIV), 225 to 245 (YVYI…YFLL), 254 to 274 (FISI…YLLI), 287 to 307 (ATVI…IVLI), 329 to 349 (YLYL…ALSV), 376 to 396 (SIFG…WGLI), 432 to 452 (IVYL…LFNI), 458 to 478 (LVVS…IALS), 491 to 511 (IGMA…PVFF), and 523 to 543 (IYLY…GNWI).

The protein localises to the cell membrane. This is an uncharacterized protein from Mycoplasmoides gallisepticum (strain R(low / passage 15 / clone 2)) (Mycoplasma gallisepticum).